The sequence spans 160 residues: Small ribosomal subunit protein uS7A (160 aa).

Belongs to the universal ribosomal protein uS7 family. In terms of assembly, part of the 30S ribosomal subunit. Contacts proteins S9 and S11.

Functionally, one of the primary rRNA binding proteins, it binds directly to 16S rRNA where it nucleates assembly of the head domain of the 30S subunit. Is located at the subunit interface close to the decoding center, probably blocks exit of the E-site tRNA. This chain is Small ribosomal subunit protein uS7A, found in Aquifex aeolicus (strain VF5).